The sequence spans 709 residues: RxLR effector protein PITG_15110 (709 aa).

Residues 1 to 18 (MHAYSAAVLMGLLMVAEG) form the signal peptide. A RxLR-dEER motif is present at residues 51–66 (RLLREPETTEASNEDR).

This sequence belongs to the RxLR effector family.

It is found in the secreted. It localises to the host cytoplasm. The protein localises to the host cytoskeleton. In terms of biological role, effector that enhances P.infestans colonization of Nicotiana benthamiana leaves. The sequence is that of RxLR effector protein PITG_15110 from Phytophthora infestans (strain T30-4) (Potato late blight agent).